A 400-amino-acid polypeptide reads, in one-letter code: Sensor histidine kinase LnrJ (400 aa).

At 1–2 (MK) the chain is on the extracellular side. A helical membrane pass occupies residues 3 to 23 (ALFFTRMFTLMVSCLMYLSIV). Residues 24 to 27 (KEDN) are Cytoplasmic-facing. Residues 28 to 48 (WFGYVFIAAGAAMYAANHVLL) form a helical membrane-spanning segment. At 49–61 (TKETNAIWFCLID) the chain is on the extracellular side. Residues 62-82 (IAIGFSFGFIFPGTGLFIIML) form a helical membrane-spanning segment. The Cytoplasmic segment spans residues 83 to 101 (CPVAVAFFLRGFPKRTAWS). Residues 102 to 122 (VLCLSSILFLTVLIRTYAMFG) traverse the membrane as a helical segment. Residues 123–125 (NEF) lie on the Extracellular side of the membrane. Residues 126 to 146 (VIDHLTSMTFVVFCGVVGKLI) traverse the membrane as a helical segment. Topologically, residues 147-400 (RKLLDAQDTA…GPVQQKESLS (254 aa)) are cytoplasmic. In terms of domain architecture, Histidine kinase spans 190–385 (IYERNRMARE…TVNAEFSLAN (196 aa)). His-201 is modified (phosphohistidine; by autocatalysis).

Autophosphorylated.

The protein localises to the cell membrane. The catalysed reaction is ATP + protein L-histidine = ADP + protein N-phospho-L-histidine.. Its function is as follows. Required for resistance to linearmycins, a family of antibiotic-specialized metabolites produced by some streptomycetes. Member of the two-component regulatory system LnrJ/LnrK, which induces expression of the LnrLMN ABC transporter in response to linearmycins and other polyenes. Acts as a specific sensor for linearmycin, either directly through binding or indirectly through membrane perturbation. Probably activates LnrK by phosphorylation. May also promote biofilm formation. In Bacillus subtilis (strain 168), this protein is Sensor histidine kinase LnrJ.